The primary structure comprises 210 residues: Orotate phosphoribosyltransferase (210 aa).

Residues Arg-94, Lys-98, His-100, and 120 to 128 (EDLISTGGS) contribute to the 5-phospho-alpha-D-ribose 1-diphosphate site. Ser-124 contacts orotate.

The protein belongs to the purine/pyrimidine phosphoribosyltransferase family. PyrE subfamily. Homodimer. It depends on Mg(2+) as a cofactor.

It carries out the reaction orotidine 5'-phosphate + diphosphate = orotate + 5-phospho-alpha-D-ribose 1-diphosphate. It participates in pyrimidine metabolism; UMP biosynthesis via de novo pathway; UMP from orotate: step 1/2. Its function is as follows. Catalyzes the transfer of a ribosyl phosphate group from 5-phosphoribose 1-diphosphate to orotate, leading to the formation of orotidine monophosphate (OMP). The chain is Orotate phosphoribosyltransferase from Bacillus mycoides (strain KBAB4) (Bacillus weihenstephanensis).